The primary structure comprises 48 residues: Sperm protamine P1 (48 aa).

This sequence belongs to the protamine P1 family. As to expression, testis.

It localises to the nucleus. The protein resides in the chromosome. Protamines substitute for histones in the chromatin of sperm during the haploid phase of spermatogenesis. They compact sperm DNA into a highly condensed, stable and inactive complex. This is Sperm protamine P1 (PRM1) from Eptesicus fuscus (Big brown bat).